The following is a 466-amino-acid chain: MLPSTIQTLTLFLTSGGVLLSLYVSASLSYLLYSDILLKFSTTKITAPTMSLDCANISNVQAVNRSATKEMTFLLPEPEWTYPRLSCQGSTFQKALLISPHRFGEARGNSAPLIIREPFIACGPKECKHFALTHYAAQPGGYYNGTRKDRNKLRHLISVKLGKIPTVENSIFHMAAWSGSACHDGREWTYIGVDGPDSNALIKIKYGEAYTDTYHSYANNILRTQESACNCIGGDCYLMITDGSASGISKCRFLKIREGRIIKEIFPTGRVEHTEECTCGFASNKTIECACRDNSYTAKRPFVKLNVETDTAEIRLMCTETYLDTPRPDDGSITGPCESNGDKGLGGIKGGFVHQRMASKIGRWYSRTMSKTERMGMELYVKYDGDPWTDSDALAPSGVMVSMKEPGWYSFGFEIKDKKCDVPCIGIEMVHDGGKETWHSAATAIYCLMGSGQLLWDTVTGVDMAL.

The Intravirion portion of the chain corresponds to 1–8 (MLPSTIQT). The helical transmembrane segment at 9 to 31 (LTLFLTSGGVLLSLYVSASLSYL) threads the bilayer. The involved in apical transport and lipid raft association stretch occupies residues 13–35 (LTSGGVLLSLYVSASLSYLLYSD). Topologically, residues 32–466 (LYSDILLKFS…DTVTGVDMAL (435 aa)) are virion surface. The interval 38 to 86 (LKFSTTKITAPTMSLDCANISNVQAVNRSATKEMTFLLPEPEWTYPRLS) is hypervariable stalk region. N-linked (GlcNAc...) asparagine; by host glycosylation is found at Asn56 and Asn64. 8 disulfides stabilise this stretch: Cys87–Cys420, Cys122–Cys127, Cys182–Cys229, Cys231–Cys236, Cys277–Cys291, Cys279–Cys289, Cys318–Cys337, and Cys424–Cys447. The head of neuraminidase stretch occupies residues 89 to 466 (GSTFQKALLI…DTVTGVDMAL (378 aa)). Arg116 provides a ligand contact to substrate. Asn144 carries N-linked (GlcNAc...) asparagine; by host glycosylation. The active-site Proton donor/acceptor is Asp149. A substrate-binding site is contributed by Arg150. 275-276 (EE) is a substrate binding site. N-linked (GlcNAc...) asparagine; by host glycosylation occurs at Asn284. Arg292 is a substrate binding site. Ca(2+) contacts are provided by Asp293 and Asp324. Arg374 is a binding site for substrate. Tyr409 functions as the Nucleophile in the catalytic mechanism.

This sequence belongs to the glycosyl hydrolase 34 family. As to quaternary structure, homotetramer. Requires Ca(2+) as cofactor. In terms of processing, N-glycosylated.

The protein resides in the virion membrane. It localises to the host apical cell membrane. It catalyses the reaction Hydrolysis of alpha-(2-&gt;3)-, alpha-(2-&gt;6)-, alpha-(2-&gt;8)- glycosidic linkages of terminal sialic acid residues in oligosaccharides, glycoproteins, glycolipids, colominic acid and synthetic substrates.. Inhibited by the neuraminidase inhibitors zanamivir (Relenza) and oseltamivir (Tamiflu). These drugs interfere with the release of progeny virus from infected cells and are effective against all influenza strains. Resistance to neuraminidase inhibitors is quite rare. Catalyzes the removal of terminal sialic acid residues from viral and cellular glycoconjugates. Cleaves off the terminal sialic acids on the glycosylated HA during virus budding to facilitate virus release. Additionally helps virus spread through the circulation by further removing sialic acids from the cell surface. These cleavages prevent self-aggregation and ensure the efficient spread of the progeny virus from cell to cell. Otherwise, infection would be limited to one round of replication. Described as a receptor-destroying enzyme because it cleaves a terminal sialic acid from the cellular receptors. May facilitate viral invasion of the upper airways by cleaving the sialic acid moieties on the mucin of the airway epithelial cells. Likely to plays a role in the budding process through its association with lipid rafts during intracellular transport. May additionally display a raft-association independent effect on budding. Plays a role in the determination of host range restriction on replication and virulence. Sialidase activity in late endosome/lysosome traffic seems to enhance virus replication. The protein is Neuraminidase of Homo sapiens (Human).